A 143-amino-acid polypeptide reads, in one-letter code: Transmembrane protein 80 (143 aa).

The next 4 helical transmembrane spans lie at 21-41 (MLFYLSGTYYALYFLATLLMI), 55-75 (LVLDLALLFLMGILEAVRLYL), 99-119 (ALLSAHFLLWQALVLWADWAL), and 121-141 (ATLLALHGLEAVLQVVAIAAF).

The protein localises to the membrane. It is found in the cell projection. Its subcellular location is the cilium. This is Transmembrane protein 80 from Homo sapiens (Human).